A 77-amino-acid polypeptide reads, in one-letter code: Acyl carrier protein (77 aa).

Residues 2 to 77 form the Carrier domain; the sequence is ASIEKRIKEI…DAIDYITDHT (76 aa). At Ser-37 the chain carries O-(pantetheine 4'-phosphoryl)serine.

It belongs to the acyl carrier protein (ACP) family. In terms of processing, 4'-phosphopantetheine is transferred from CoA to a specific serine of apo-ACP by AcpS. This modification is essential for activity because fatty acids are bound in thioester linkage to the sulfhydryl of the prosthetic group.

The protein localises to the cytoplasm. Its pathway is lipid metabolism; fatty acid biosynthesis. Carrier of the growing fatty acid chain in fatty acid biosynthesis. The sequence is that of Acyl carrier protein from Geobacter sp. (strain M21).